The chain runs to 558 residues: Phosphatidylserine lipase ABHD16A (558 aa).

Helical transmembrane passes span 60–80 (ILAL…FAFF) and 93–113 (VVPF…VACL). At 114 to 558 (RGIGRWTNPQ…AQNFQMPWHL (445 aa)) the chain is on the cytoplasmic side. Residues 281 to 407 (LVICCEGNAG…LVTRTVRQHL (127 aa)) form the AB hydrolase-1 domain. Catalysis depends on charge relay system residues Ser-355, Asp-430, and His-507.

Belongs to the AB hydrolase superfamily. ABHD16 family.

Its subcellular location is the membrane. It carries out the reaction 1-heptadecanoyl-2-(5Z,8Z,11Z,14Z-eicosatetraenoyl)-sn-glycero-3-phosphoserine + H2O = 1-heptadecanoyl-sn-glycero-3-phosphoserine + (5Z,8Z,11Z,14Z)-eicosatetraenoate + H(+). It catalyses the reaction 1-hexadecanoyl-2-(9Z-octadecenoyl)-sn-glycero-3-phospho-L-serine + H2O = 1-hexadecanoyl-sn-glycero-3-phospho-L-serine + (9Z)-octadecenoate + H(+). The catalysed reaction is 1-octadecanoyl-2-(9Z,12Z-octadecadienoyl)-sn-glycero-3-phosphoserine + H2O = 1-octadecanoyl-sn-glycero-3-phosphoserine + (9Z,12Z)-octadecadienoate + H(+). The enzyme catalyses 1-heptadecanoyl-2-(5Z,8Z,11Z,14Z-eicosatetraenoyl)-sn-glycero-3-phosphocholine + H2O = 1-heptadecanoyl-sn-glycero-3-phosphocholine + (5Z,8Z,11Z,14Z)-eicosatetraenoate + H(+). It carries out the reaction 1-hexadecanoyl-2-(9Z-octadecenoyl)-sn-glycero-3-phosphoglycerol + H2O = 1-hexadecanoyl-sn-glycero-3-phosphoglycerol + (9Z)-octadecenoate + H(+). It catalyses the reaction 1-hexadecanoyl-2-(9Z-octadecenoyl)-sn-glycero-3-phospho-(1D-myo-inositol) + H2O = 1-hexadecanoyl-sn-glycero-3-phospho-(1D-myo-inositol) + (9Z)-octadecenoate + H(+). The catalysed reaction is 1-heptadecanoyl-2-(5Z,8Z,11Z,14Z-eicosatetraenoyl)-sn-glycero-3-phosphoethanolamine + H2O = 1-heptadecanoyl-sn-glycero-3-phosphoethanolamine + (5Z,8Z,11Z,14Z)-eicosatetraenoate + H(+). The enzyme catalyses 1-hexadecanoyl-2-(9Z-octadecenoyl)-sn-glycero-3-phospho-(1'-sn-glycerol) + H2O = 1-hexadecanoyl-sn-glycero-3-phospho-(1'-sn-glycerol) + (9Z)-octadecenoate + H(+). It carries out the reaction Hydrolyzes glycerol monoesters of long-chain fatty acids.. It catalyses the reaction 1-tetradecanoylglycerol + H2O = tetradecanoate + glycerol + H(+). The catalysed reaction is 2-hexadecanoylglycerol + H2O = glycerol + hexadecanoate + H(+). The enzyme catalyses 1-(9Z-octadecenoyl)-glycerol + H2O = glycerol + (9Z)-octadecenoate + H(+). It carries out the reaction 2-(9Z-octadecenoyl)-glycerol + H2O = glycerol + (9Z)-octadecenoate + H(+). It catalyses the reaction 2-(9Z,12Z-octadecadienoyl)-glycerol + H2O = (9Z,12Z)-octadecadienoate + glycerol + H(+). The catalysed reaction is 1-(5Z,8Z,11Z,14Z-eicosatetraenoyl)-glycerol + H2O = glycerol + (5Z,8Z,11Z,14Z)-eicosatetraenoate + H(+). The enzyme catalyses 2-(5Z,8Z,11Z,14Z-eicosatetraenoyl)-glycerol + H2O = glycerol + (5Z,8Z,11Z,14Z)-eicosatetraenoate + H(+). It carries out the reaction prostaglandin D2-1-glycerol ester + H2O = prostaglandin D2 + glycerol + H(+). It catalyses the reaction 2-glyceryl-15-deoxy-Delta(12,14)-prostaglandin J2 + H2O = 15-deoxy-Delta(12,14)-prostaglandin J2 + glycerol + H(+). The catalysed reaction is 1-(9Z,12Z-octadecadienoyl)-glycerol + H2O = (9Z,12Z)-octadecadienoate + glycerol + H(+). Its function is as follows. Phosphatidylserine (PS) lipase that mediates the hydrolysis of phosphatidylserine to generate lysophosphatidylserine (LPS). LPS constitutes a class of signaling lipids that regulates immunological and neurological processes. Has no activity towards diacylglycerol, triacylglycerol or lysophosphatidylserine lipase. Also has monoacylglycerol lipase activity, with preference for 1-(9Z,12Z-octadecadienoyl)-glycerol (1-LG) and 2-glyceryl-15-deoxy-Delta(12,14)-prostaglandin J2 (15d-PGJ(2)-G). The sequence is that of Phosphatidylserine lipase ABHD16A from Macaca fascicularis (Crab-eating macaque).